We begin with the raw amino-acid sequence, 110 residues long: UPF0122 protein Aflv_1766 (110 aa).

This sequence belongs to the UPF0122 family.

Functionally, might take part in the signal recognition particle (SRP) pathway. This is inferred from the conservation of its genetic proximity to ftsY/ffh. May be a regulatory protein. The sequence is that of UPF0122 protein Aflv_1766 from Anoxybacillus flavithermus (strain DSM 21510 / WK1).